The sequence spans 337 residues: Tetraacyldisaccharide 4'-kinase (337 aa).

52–59 (TLGGAGKT) is an ATP binding site.

It belongs to the LpxK family.

It catalyses the reaction a lipid A disaccharide + ATP = a lipid IVA + ADP + H(+). The protein operates within glycolipid biosynthesis; lipid IV(A) biosynthesis; lipid IV(A) from (3R)-3-hydroxytetradecanoyl-[acyl-carrier-protein] and UDP-N-acetyl-alpha-D-glucosamine: step 6/6. Functionally, transfers the gamma-phosphate of ATP to the 4'-position of a tetraacyldisaccharide 1-phosphate intermediate (termed DS-1-P) to form tetraacyldisaccharide 1,4'-bis-phosphate (lipid IVA). The sequence is that of Tetraacyldisaccharide 4'-kinase from Methylobacterium nodulans (strain LMG 21967 / CNCM I-2342 / ORS 2060).